Reading from the N-terminus, the 414-residue chain is Nuclear pore complex-interacting protein family member B7 (414 aa).

The first 18 residues, 1–18 (MRLRFWLLIWLLLGFISH), serve as a signal peptide directing secretion. An N-linked (GlcNAc...) asparagine glycan is attached at Asn111. 2 disordered regions span residues 242–262 (RMGR…NSLS) and 335–402 (SPLP…LRTR). A compositionally biased stretch (polar residues) spans 252-262 (QQHSITDNSLS). Residues 356 to 384 (EVEKPPKPKRWRVDEVEQSPKPKRQREAE) are compositionally biased toward basic and acidic residues. Basic residues predominate over residues 390 to 402 (KPKRRRLSKLRTR).

It belongs to the NPIP family.

Its subcellular location is the secreted. This Homo sapiens (Human) protein is Nuclear pore complex-interacting protein family member B7 (NPIPB7).